Consider the following 475-residue polypeptide: Sulfate adenylyltransferase subunit 1 (475 aa).

The region spanning 25 to 239 (KSLLRFLTCG…EVLETVEIQR (215 aa)) is the tr-type G domain. A G1 region spans residues 34–41 (GSVDDGKS). GTP is bound at residue 34-41 (GSVDDGKS). The interval 92–96 (GITID) is G2. The interval 113-116 (DTPG) is G3. GTP contacts are provided by residues 113 to 117 (DTPGH) and 168 to 171 (NKMD). The G4 stretch occupies residues 168 to 171 (NKMD). The tract at residues 206-208 (SAL) is G5.

This sequence belongs to the TRAFAC class translation factor GTPase superfamily. Classic translation factor GTPase family. CysN/NodQ subfamily. As to quaternary structure, heterodimer composed of CysD, the smaller subunit, and CysN.

The catalysed reaction is sulfate + ATP + H(+) = adenosine 5'-phosphosulfate + diphosphate. The protein operates within sulfur metabolism; hydrogen sulfide biosynthesis; sulfite from sulfate: step 1/3. Functionally, with CysD forms the ATP sulfurylase (ATPS) that catalyzes the adenylation of sulfate producing adenosine 5'-phosphosulfate (APS) and diphosphate, the first enzymatic step in sulfur assimilation pathway. APS synthesis involves the formation of a high-energy phosphoric-sulfuric acid anhydride bond driven by GTP hydrolysis by CysN coupled to ATP hydrolysis by CysD. This is Sulfate adenylyltransferase subunit 1 from Escherichia fergusonii (strain ATCC 35469 / DSM 13698 / CCUG 18766 / IAM 14443 / JCM 21226 / LMG 7866 / NBRC 102419 / NCTC 12128 / CDC 0568-73).